We begin with the raw amino-acid sequence, 510 residues long: Cytochrome P450 11B2, mitochondrial (510 aa).

Residues methionine 1 to leucine 34 constitute a mitochondrion transit peptide. Residue phenylalanine 391 coordinates 21-hydroxyprogesterone. Residue cysteine 457 participates in heme binding.

It belongs to the cytochrome P450 family. It depends on heme as a cofactor. Adrenal cortex.

The protein localises to the mitochondrion inner membrane. The enzyme catalyses a steroid + 2 reduced [adrenodoxin] + O2 + 2 H(+) = an 11beta-hydroxysteroid + 2 oxidized [adrenodoxin] + H2O. It catalyses the reaction 21-hydroxyprogesterone + 2 reduced [adrenodoxin] + O2 + 2 H(+) = corticosterone + 2 oxidized [adrenodoxin] + H2O. The catalysed reaction is corticosterone + 2 reduced [adrenodoxin] + O2 + 2 H(+) = 18-hydroxycorticosterone + 2 oxidized [adrenodoxin] + H2O. It carries out the reaction 18-hydroxycorticosterone + 2 reduced [adrenodoxin] + O2 + 2 H(+) = aldosterone + 2 oxidized [adrenodoxin] + 2 H2O. The enzyme catalyses 11-deoxycortisol + 2 reduced [adrenodoxin] + O2 + 2 H(+) = cortisol + 2 oxidized [adrenodoxin] + H2O. It catalyses the reaction cortisol + 2 reduced [adrenodoxin] + O2 + 2 H(+) = 18-hydroxycortisol + 2 oxidized [adrenodoxin] + H2O. The catalysed reaction is 21-hydroxyprogesterone + 2 reduced [adrenodoxin] + O2 + 2 H(+) = 18-hydroxy-11-deoxycorticosterone + 2 oxidized [adrenodoxin] + H2O. It carries out the reaction 18-hydroxycortisol + 2 reduced [adrenodoxin] + O2 + 2 H(+) = 18-oxocortisol + 2 oxidized [adrenodoxin] + 2 H2O. Its pathway is steroid biosynthesis. Its function is as follows. A cytochrome P450 monooxygenase that catalyzes the biosynthesis of aldosterone, the main mineralocorticoid responsible for salt and water homeostasis. Catalyzes three sequential oxidative reactions of 11-deoxycorticosterone (21-hydroxyprogesterone), namely 11-beta hydroxylation, followed by two successive oxidations at C18 yielding 18-hydroxy and then 18-oxo intermediates (that do not leave the enzyme active site during the consecutive hydroxylation reactions), and end with the formation of aldosterone. Can also produce 18-hydroxycortisol and 18-oxocortisol, derived from successive oxidations of cortisol at C18, normally found at very low levels, but significantly increased in primary aldosteronism, the most common form of secondary hypertension. Mechanistically, uses molecular oxygen inserting one oxygen atom into a substrate and reducing the second into a water molecule. Two electrons are provided by NADPH via a two-protein mitochondrial transfer system comprising flavoprotein FDXR (adrenodoxin/ferredoxin reductase) and nonheme iron-sulfur protein FDX1 or FDX2 (adrenodoxin/ferredoxin). Could also be involved in the androgen metabolic pathway. The chain is Cytochrome P450 11B2, mitochondrial (Cyp11b2) from Rattus norvegicus (Rat).